Reading from the N-terminus, the 351-residue chain is DNA polymerase IV (351 aa).

Positions 4–185 (IIHVDMDCFF…LPLAKIPGVG (182 aa)) constitute a UmuC domain. Residues Asp8 and Asp103 each contribute to the Mg(2+) site. Glu104 is an active-site residue.

Belongs to the DNA polymerase type-Y family. In terms of assembly, monomer. Mg(2+) serves as cofactor.

It localises to the cytoplasm. It carries out the reaction DNA(n) + a 2'-deoxyribonucleoside 5'-triphosphate = DNA(n+1) + diphosphate. Functionally, poorly processive, error-prone DNA polymerase involved in untargeted mutagenesis. Copies undamaged DNA at stalled replication forks, which arise in vivo from mismatched or misaligned primer ends. These misaligned primers can be extended by PolIV. Exhibits no 3'-5' exonuclease (proofreading) activity. May be involved in translesional synthesis, in conjunction with the beta clamp from PolIII. The protein is DNA polymerase IV of Salmonella paratyphi B (strain ATCC BAA-1250 / SPB7).